Here is a 443-residue protein sequence, read N- to C-terminus: MKHIDVSQLTQQFPLLQSLIALEPVSWFNPKATTLVEGVPYVGLDGSDVADASARLARFAPYLCEAFPETRASKGILESDIAAIPAMQATLNQRYGVEVTGRLLLKKDSHLPISGSIKARGGIYEVLAHAEQLAIKAGLLCEEDDYRKLFTDEFRHFFGQYSIAVGSTGNLGMSIGIMSARLGFRVTVHMSADAREWKKRKLRKHGAIVVEYAEDYGVAVEQGRKEAERDPNCFFIDDENSRTLFLGYAVAGERVKKQFDDMGIVVDADHPLFVYLPCGVGGGPGGVAFGLKLAFGDNVHCLFAEPTHSPCMLLGVHTGLHDAIAVQDLGIDNLTAADGLAVGRASGFVGRAMERLLAGFYTLSDQEMYDLLGLLARAEQIKLEPSALAGMAGPWRVAANLEWQASQGLNAAKMVRATHLVWATGGGMVPAEEMENYLASAHR.

Position 118 is an N6-(pyridoxal phosphate)lysine (lysine 118).

This sequence belongs to the serine/threonine dehydratase family. DsdA subfamily. Pyridoxal 5'-phosphate is required as a cofactor.

The enzyme catalyses D-serine = pyruvate + NH4(+). In Aeromonas hydrophila subsp. hydrophila (strain ATCC 7966 / DSM 30187 / BCRC 13018 / CCUG 14551 / JCM 1027 / KCTC 2358 / NCIMB 9240 / NCTC 8049), this protein is Probable D-serine dehydratase.